The sequence spans 258 residues: Regulatory protein RecX (258 aa).

This sequence belongs to the RecX family.

The protein resides in the cytoplasm. In terms of biological role, modulates RecA activity. This chain is Regulatory protein RecX, found in Streptococcus equi subsp. zooepidemicus (strain MGCS10565).